Reading from the N-terminus, the 1270-residue chain is Vigilin (1270 aa).

The segment covering 1–11 (MSSVAVLTQES) has biased composition (polar residues). Disordered stretches follow at residues 1–23 (MSSV…TQQQ) and 28–47 (ALNS…FPPL). 11 consecutive KH domains span residues 150–188 (ASAT…IPRP), 219–260 (DKRA…IPPP), 291–333 (KKKT…IPPT), 360–402 (ANSF…EFTE), 431–473 (INRT…IPPD), 504–545 (ENER…NFPD), 577–619 (VENS…LPGR), 651–693 (ANIT…FPTE), 724–766 (QTKS…FPTS), 798–840 (DNVV…LPTV), and 872–913 (EAQV…FPDR). A disordered region spans residues 911 to 947 (PDREENPAPVAEPALQENGEEGGEGKDGKDADPSSPR). Residues 933–947 (GEGKDGKDADPSSPR) show a composition bias toward basic and acidic residues. KH domains are found at residues 970–1012 (ALVP…VPAP), 1051–1093 (ALRS…FPDK), and 1126–1168 (LEQM…FPQS). Residues 1217 to 1270 (SHEESKVPSKGFVVRDAPCGTVNNEKAPDMSSSEDFPSFGAQVAPKTLPWGPKR) form a disordered region.

It is found in the cytoplasm. This chain is Vigilin (HDLBP), found in Gallus gallus (Chicken).